The following is a 25-amino-acid chain: Snake venom metalloproteinase catroxase (25 aa).

Ca(2+) is bound at residue E9.

Belongs to the venom metalloproteinase (M12B) family. Monomer. Requires Zn(2+) as cofactor. As to expression, expressed by the venom gland.

It localises to the secreted. Inhibited by EDTA, beta-mercaptoethanol, but not by PMSF, p-tosyl-L-phenylalanine chloromethyl ketone, p-tosyl-L-lysine chloromethyl ketone, soybean trypsin inhibitor and aprotinin. Metalloprotease that is highly active against alpha-(FGA) and beta-chains (FGB) of fibrinogen molecules. This chain is Snake venom metalloproteinase catroxase, found in Crotalus atrox (Western diamondback rattlesnake).